The chain runs to 511 residues: Phospho-2-dehydro-3-deoxyheptonate aldolase 1, chloroplastic (511 aa).

The transit peptide at 1-49 directs the protein to the chloroplast; sequence MALSNTLSLSSSKSLVQSHLLHNPTPQPRFSLFPTTQHGRRHPISAVHA.

It belongs to the class-II DAHP synthase family. As to expression, higher levels seen in the cotyledons than in the leaves and flowers. Lower levels seen in the roots and stems.

The protein localises to the plastid. It is found in the chloroplast. It carries out the reaction D-erythrose 4-phosphate + phosphoenolpyruvate + H2O = 7-phospho-2-dehydro-3-deoxy-D-arabino-heptonate + phosphate. Its pathway is metabolic intermediate biosynthesis; chorismate biosynthesis; chorismate from D-erythrose 4-phosphate and phosphoenolpyruvate: step 1/7. Its function is as follows. May be involved in the synthesis of secondary metabolites derived from intermediates of the pre-chorismate pathway up to shikimate. In Solanum lycopersicum (Tomato), this protein is Phospho-2-dehydro-3-deoxyheptonate aldolase 1, chloroplastic.